Consider the following 1457-residue polypeptide: Bridge-like lipid transfer protein family member 3B (1457 aa).

In terms of domain architecture, Chorein N-terminal spans 3 to 94 (GIIKKQILKH…DKVIMEMSTC (92 aa)). 2 disordered regions span residues 267–295 (STEQ…KTPQ) and 409–449 (DRNL…PQPS). Polar residues predominate over residues 278-295 (PTQSSTVTSSAQHVKTPQ). Serine 414, serine 418, serine 774, and serine 934 each carry phosphoserine. Disordered stretches follow at residues 975–1038 (SEDE…TGKG), 1056–1099 (ASLS…LSVS), and 1145–1183 (SNTS…TQEN). Residues 980 to 995 (SGLSHKSGSGEMTSEG) are compositionally biased toward polar residues. Position 1008 is a phosphoserine (serine 1008). Over residues 1145-1180 (SNTSCQSPAESVNTSANTQTCGEASPEAVSTNSEGT) the composition is skewed to polar residues. Residues 1410–1455 (ANFLDITREQLMEENECLRQRLAQAKMELAEAHSARDELLHQMKRM) adopt a coiled-coil conformation.

As to quaternary structure, homodimer (via N-terminus). Associates with the Golgi-associated retrograde protein (GARP) complex. Interacts with GARP complex component VPS52. Interacts (via C-terminal coiled-coil domain) with STX6.

It is found in the cytoplasm. The protein localises to the cytosol. The protein resides in the early endosome. Functionally, tube-forming lipid transport protein which mediates the transfer of lipids between membranes at organelle contact sites. Required for retrograde traffic of vesicle clusters in the early endocytic pathway to the Golgi complex. The chain is Bridge-like lipid transfer protein family member 3B (Bltp3b) from Mus musculus (Mouse).